Here is a 465-residue protein sequence, read N- to C-terminus: MSSSVVAETVPSGSGSWFSHFKATLVLGIPLIGAQLAQLGIHTTDMVIVGQLGAEKLAAMVLAGQFFFVVFIFGSGFSVAVVPMVAQAYGQGDATSARRSLRMGMWVAIAYWLLALPIFFNAERILVYLGQNPNVAALTGHYLAIAKFGLLPALLFYVLRGLVSAIGRAGIILYVTIIMLVMNGLMAYVLVFGHFGLPAMGMNGAAVVAVIVNAFSFIFIVAYVQTREETKKYELFVRFWRPDWHALFEVLRLGLPISITILAEVTLFAAASILMGQIGTVQLAAHGIALQLASIAFMIPLGLSQAATVRVGVARGQGDFKNLIRASIMIYAIACGIALCGGILFAAVPEFLAKWFLDPKLPEAAEVLAYASSLVVIAGIFQLVDGIQAVTAGLLRGLKDARIPAMLALISYWPIGLALAWTMAFPLGFGGRGVWFGFVIGLSTAAVLLTVRFVLLVKREMKTAR.

The next 11 membrane-spanning stretches (helical) occupy residues 61 to 83, 104 to 126, 141 to 163, 170 to 192, 202 to 224, 251 to 273, 283 to 305, 326 to 348, 368 to 390, 403 to 425, and 435 to 457; these read VLAGQFFFVVFIFGSGFSVAVVP, GMWVAIAYWLLALPIFFNAERIL, HYLAIAKFGLLPALLFYVLRGLV, GIILYVTIIMLVMNGLMAYVLVF, MNGAAVVAVIVNAFSFIFIVAYV, LRLGLPISITILAEVTLFAAASI, LAAHGIALQLASIAFMIPLGLSQ, ASIMIYAIACGIALCGGILFAAV, LAYASSLVVIAGIFQLVDGIQAV, IPAMLALISYWPIGLALAWTMAF, and WFGFVIGLSTAAVLLTVRFVLLV.

The protein belongs to the multi antimicrobial extrusion (MATE) (TC 2.A.66.1) family.

It localises to the cell inner membrane. In terms of biological role, multidrug efflux pump. The polypeptide is Probable multidrug resistance protein NorM (norM) (Agrobacterium fabrum (strain C58 / ATCC 33970) (Agrobacterium tumefaciens (strain C58))).